A 919-amino-acid polypeptide reads, in one-letter code: Exostosin-like 3 (919 aa).

The Cytoplasmic segment spans residues 1-30; it reads MTGYTMLRNGGAGNGGQTCMLRWSNRIRLT. Residues 1 to 140 are required for interaction with REG3A; sequence MTGYTMLRNG…LKNVISQTEH (140 aa). A helical; Signal-anchor for type II membrane protein membrane pass occupies residues 31 to 51; it reads WLSFTLFVILVFFPLIAHYYL. Residues 52-919 are Lumenal-facing; sequence TTLDEADEAG…HDKTKCFKFI (868 aa). 2 disulfide bridges follow: Cys-177–Cys-182 and Cys-188–Cys-236. Residue Asn-290 is glycosylated (N-linked (GlcNAc...) asparagine). Residue Ser-362 is modified to Phosphoserine. The cysteines at positions 400 and 415 are disulfide-linked. N-linked (GlcNAc...) asparagine glycosylation occurs at Asn-592. The UDP-N-acetyl-alpha-D-glucosamine site is built by Leu-668, Arg-672, Asn-697, Asn-723, Arg-728, Asp-744, Asp-745, and Asp-746. Residue Asp-746 participates in Mn(2+) binding. A glycan (N-linked (GlcNAc...) asparagine) is linked at Asn-790. Cys-831 and Cys-879 are oxidised to a cystine. The UDP-N-acetyl-alpha-D-glucosamine site is built by Glu-832, Asp-833, and Arg-876. Asp-833 is a catalytic residue.

Belongs to the glycosyltransferase 47 family. As to quaternary structure, homodimer; disulfide-linked. Interacts with REG3A. It depends on Mn(2+) as a cofactor. In terms of tissue distribution, ubiquitous. Expressed in keratinocytes. Expressed in pancreas.

It localises to the endoplasmic reticulum membrane. The protein resides in the golgi apparatus. The protein localises to the cell membrane. Its subcellular location is the nucleus. The catalysed reaction is 3-O-(beta-D-GlcA-(1-&gt;3)-beta-D-Gal-(1-&gt;3)-beta-D-Gal-(1-&gt;4)-beta-D-Xyl)-L-seryl-[protein] + UDP-N-acetyl-alpha-D-glucosamine = 3-O-(alpha-D-GlcNAc-(1-&gt;4)-beta-D-GlcA-(1-&gt;3)-beta-D-Gal-(1-&gt;3)-beta-D-Gal-(1-&gt;4)-beta-D-Xyl)-L-seryl-[protein] + UDP + H(+). The protein operates within glycan metabolism; heparan sulfate biosynthesis. Its function is as follows. Glycosyltransferase which regulates the biosynthesis of heparan sulfate (HS). Initiates HS synthesis by transferring the first N-acetyl-alpha-D-glucosamine (alpha-GlcNAc) residue (GlcNAcT-I activity) to the tetrasaccharide linker (GlcA-Gal-Gal-Xyl-)Ser core linker. May also transfer alpha-GlcNAc residues during HS elongation (GlcNAcT-II activity). Lacks glucuronyl transferase II (GlcAT-II) activity. Important for both skeletal development and hematopoiesis, through the formation of HS proteoglycans (HSPGs). Through the synthesis of HS, regulates postnatal pancreatic islet maturation and insulin secretion. In terms of biological role, receptor for REG3A, REG3B and REG3G, induces the activation of downstream signaling pathways such as PI3K-AKT or RAS-RAF-MEK-ERK signaling pathway. Required for the function of REG3A in regulating keratinocyte proliferation and differentiation. Required for the inhibition of skin inflammation mediated by REG3A through the activation of PI3K-AKT-STAT3 pathway. Required for the function of REG3A and REG3G in glucose tolerance in pancreas. Expressed in microglia, is activated by nociceptor-derived REG3G in response to endotoxins, leading to the inhibition of kynurenine pathway to prevent endotoxic death. The sequence is that of Exostosin-like 3 from Homo sapiens (Human).